A 291-amino-acid polypeptide reads, in one-letter code: ATP synthase subunit a (291 aa).

6 consecutive transmembrane segments (helical) span residues 50-70 (LDSM…FWIV), 108-128 (IAPL…MDLI), 161-181 (DPNI…FYSI), 203-223 (PVAK…TFLA), 241-261 (LIFI…SVPW), and 262-282 (AIFH…LTIV).

Belongs to the ATPase A chain family. As to quaternary structure, F-type ATPases have 2 components, CF(1) - the catalytic core - and CF(0) - the membrane proton channel. CF(1) has five subunits: alpha(3), beta(3), gamma(1), delta(1), epsilon(1). CF(0) has three main subunits: a(1), b(2) and c(9-12). The alpha and beta chains form an alternating ring which encloses part of the gamma chain. CF(1) is attached to CF(0) by a central stalk formed by the gamma and epsilon chains, while a peripheral stalk is formed by the delta and b chains.

It is found in the cell inner membrane. Its function is as follows. Key component of the proton channel; it plays a direct role in the translocation of protons across the membrane. The sequence is that of ATP synthase subunit a from Acinetobacter baumannii (strain SDF).